Reading from the N-terminus, the 37-residue chain is Cytochrome b6-f complex subunit 5 (37 aa).

A helical transmembrane segment spans residues 5 to 25 (LLSGIVLGLVPITLAGLFVTA).

This sequence belongs to the PetG family. In terms of assembly, the 4 large subunits of the cytochrome b6-f complex are cytochrome b6, subunit IV (17 kDa polypeptide, PetD), cytochrome f and the Rieske protein, while the 4 small subunits are PetG, PetL, PetM and PetN. The complex functions as a dimer.

The protein resides in the plastid. The protein localises to the chloroplast thylakoid membrane. Functionally, component of the cytochrome b6-f complex, which mediates electron transfer between photosystem II (PSII) and photosystem I (PSI), cyclic electron flow around PSI, and state transitions. PetG is required for either the stability or assembly of the cytochrome b6-f complex. In Gnetum parvifolium (Small-leaved jointfir), this protein is Cytochrome b6-f complex subunit 5.